Reading from the N-terminus, the 87-residue chain is MARVTVEDCLEKLDNRFELVLVAGKRAHQLQSGGKEPRVAWENDKPTVVALREIAEGLVTAESVDNPIADRSADVDELALLTQSFGE.

Belongs to the RNA polymerase subunit omega family. In terms of assembly, the RNAP catalytic core consists of 2 alpha, 1 beta, 1 beta' and 1 omega subunit. When a sigma factor is associated with the core the holoenzyme is formed, which can initiate transcription.

It catalyses the reaction RNA(n) + a ribonucleoside 5'-triphosphate = RNA(n+1) + diphosphate. Functionally, promotes RNA polymerase assembly. Latches the N- and C-terminal regions of the beta' subunit thereby facilitating its interaction with the beta and alpha subunits. The protein is DNA-directed RNA polymerase subunit omega of Alcanivorax borkumensis (strain ATCC 700651 / DSM 11573 / NCIMB 13689 / SK2).